Here is a 445-residue protein sequence, read N- to C-terminus: Methionine aminopeptidase 2 (445 aa).

The disordered stretch occupies residues methionine 1–threonine 76. A compositionally biased stretch (basic residues) spans alanine 57–threonine 71. Substrate is bound at residue histidine 195. 3 residues coordinate a divalent metal cation: aspartate 215, aspartate 226, and histidine 295. Histidine 303 is a binding site for substrate. Residues glutamate 331 and glutamate 426 each contribute to the a divalent metal cation site.

This sequence belongs to the peptidase M24A family. Methionine aminopeptidase eukaryotic type 2 subfamily. Co(2+) is required as a cofactor. The cofactor is Zn(2+). Requires Mn(2+) as cofactor. It depends on Fe(2+) as a cofactor.

The protein localises to the cytoplasm. It carries out the reaction Release of N-terminal amino acids, preferentially methionine, from peptides and arylamides.. Its function is as follows. Cotranslationally removes the N-terminal methionine from nascent proteins. The N-terminal methionine is often cleaved when the second residue in the primary sequence is small and uncharged (Met-Ala-, Cys, Gly, Pro, Ser, Thr, or Val). This chain is Methionine aminopeptidase 2, found in Paracoccidioides lutzii (strain ATCC MYA-826 / Pb01) (Paracoccidioides brasiliensis).